Here is a 342-residue protein sequence, read N- to C-terminus: Biotin synthase (342 aa).

Positions 36–260 (NRIQISTLLS…MMPKSYIRLS (225 aa)) constitute a Radical SAM core domain. Positions 51, 55, and 58 each coordinate [4Fe-4S] cluster. Positions 95, 126, 186, and 258 each coordinate [2Fe-2S] cluster.

Belongs to the radical SAM superfamily. Biotin synthase family. As to quaternary structure, homodimer. It depends on [4Fe-4S] cluster as a cofactor. [2Fe-2S] cluster serves as cofactor.

The enzyme catalyses (4R,5S)-dethiobiotin + (sulfur carrier)-SH + 2 reduced [2Fe-2S]-[ferredoxin] + 2 S-adenosyl-L-methionine = (sulfur carrier)-H + biotin + 2 5'-deoxyadenosine + 2 L-methionine + 2 oxidized [2Fe-2S]-[ferredoxin]. It functions in the pathway cofactor biosynthesis; biotin biosynthesis; biotin from 7,8-diaminononanoate: step 2/2. Catalyzes the conversion of dethiobiotin (DTB) to biotin by the insertion of a sulfur atom into dethiobiotin via a radical-based mechanism. The polypeptide is Biotin synthase (Buchnera aphidicola subsp. Schizaphis graminum (strain Sg)).